The following is a 466-amino-acid chain: F-box/LRR-repeat protein fbxl-1 (466 aa).

Residues 54 to 100 (SLINRVLPKEVLLKVFSFLDTKALCRSAQVCRSWSILALDGSNWQRV) form the F-box domain. LRR repeat units lie at residues 122 to 147 (GGFLKELSLKGCENVHDSALRTFTSR), 148 to 173 (CPNLEHLSLYRCKRVTDASCENLGRY), 174 to 199 (CHKLNYLNLENCSSITDRAMKYIGDG), 200 to 225 (CPNLSYLNISWCDAIQDRGVQIILSN), 226 to 251 (CKSLDTLILRGCEGLTENVFGSVEAH), 252 to 277 (MGAIKKLNLLQCFQLTDITVQNIANG), 278 to 303 (ATALEYLCMSNCNQISDRSLVSLGQH), 304 to 329 (SHNLKVLELSGCTLLGDNGFIPLARG), 330 to 355 (CRQLERLDMEDCSLISDHTINSLANN), 356 to 381 (CTALRELSLSHCELITDESIQNLASK), and 408 to 433 (CKALKRIDLYDCQNVSKEAIVRFQHH).

In terms of assembly, component of the SCF (SKP1-CUL1-F-box protein)-type E3 ubiquitin ligase complex. Expressed in neuroglial cells such as the socket cell and sheath cell, neurosecretory motor neurons and regions around the pharynx and anus.

It is found in the perikaryon. Its subcellular location is the cell projection. The protein localises to the dendrite. The protein resides in the cilium. It localises to the axon. Its function is as follows. Substrate-recognition component of the SCF (SKP1-CUL1-F-box protein)-type E3 ubiquitin ligase complex. Plays a role in regulating the entry into the dauer state. In hermaphrodites, may play a role in modulating the rate of defecation. The sequence is that of F-box/LRR-repeat protein fbxl-1 from Caenorhabditis elegans.